A 125-amino-acid chain; its full sequence is Large ribosomal subunit protein bL12 (125 aa).

Belongs to the bacterial ribosomal protein bL12 family. Homodimer. Part of the ribosomal stalk of the 50S ribosomal subunit. Forms a multimeric L10(L12)X complex, where L10 forms an elongated spine to which 2 to 4 L12 dimers bind in a sequential fashion. Binds GTP-bound translation factors.

In terms of biological role, forms part of the ribosomal stalk which helps the ribosome interact with GTP-bound translation factors. Is thus essential for accurate translation. In Polaromonas sp. (strain JS666 / ATCC BAA-500), this protein is Large ribosomal subunit protein bL12.